The chain runs to 283 residues: Pantothenate synthetase (283 aa).

An ATP-binding site is contributed by 31-38 (MGALHEGH). The Proton donor role is filled by His-38. (R)-pantoate is bound at residue Gln-62. Gln-62 provides a ligand contact to beta-alanine. Residue 148-151 (GKKD) coordinates ATP. Gln-154 contributes to the (R)-pantoate binding site. Residues Val-177 and 185–188 (RSSR) each bind ATP.

It belongs to the pantothenate synthetase family. As to quaternary structure, homodimer.

Its subcellular location is the cytoplasm. It carries out the reaction (R)-pantoate + beta-alanine + ATP = (R)-pantothenate + AMP + diphosphate + H(+). It functions in the pathway cofactor biosynthesis; (R)-pantothenate biosynthesis; (R)-pantothenate from (R)-pantoate and beta-alanine: step 1/1. Its function is as follows. Catalyzes the condensation of pantoate with beta-alanine in an ATP-dependent reaction via a pantoyl-adenylate intermediate. The polypeptide is Pantothenate synthetase (Staphylococcus haemolyticus (strain JCSC1435)).